The chain runs to 106 residues: MAQEFVNCKIQPGKVVVFIKPTCPYCRRAQEILSQLPIKQGLLEFVDITATNHTNEIQDYLQQLTGARTVPRVFIGKDCIGGCSDLVSLQQSGELLTRLKQIGALQ.

At alanine 2 the chain carries N-acetylalanine. The Glutaredoxin domain occupies 3–106 (QEFVNCKIQP…TRLKQIGALQ (104 aa)). Lysine 9 carries the N6-succinyllysine modification. Cystine bridges form between cysteine 23–cysteine 26 and cysteine 79–cysteine 83.

The protein belongs to the glutaredoxin family.

It localises to the cytoplasm. Its function is as follows. Has a glutathione-disulfide oxidoreductase activity in the presence of NADPH and glutathione reductase. Reduces low molecular weight disulfides and proteins. The protein is Glutaredoxin-1 (GLRX) of Homo sapiens (Human).